An 85-amino-acid polypeptide reads, in one-letter code: ATP synthase subunit c (85 aa).

2 helical membrane-spanning segments follow: residues 22-39 (AIGA…IGKI) and 65-85 (AALI…VFFL).

The protein belongs to the ATPase C chain family. As to quaternary structure, F-type ATPases have 2 components, F(1) - the catalytic core - and F(0) - the membrane proton channel. F(1) has five subunits: alpha(3), beta(3), gamma(1), delta(1), epsilon(1). F(0) has three main subunits: a(1), b(2) and c(10-14). The alpha and beta chains form an alternating ring which encloses part of the gamma chain. F(1) is attached to F(0) by a central stalk formed by the gamma and epsilon chains, while a peripheral stalk is formed by the delta and b chains.

The protein resides in the cell inner membrane. Its function is as follows. F(1)F(0) ATP synthase produces ATP from ADP in the presence of a proton or sodium gradient. F-type ATPases consist of two structural domains, F(1) containing the extramembraneous catalytic core and F(0) containing the membrane proton channel, linked together by a central stalk and a peripheral stalk. During catalysis, ATP synthesis in the catalytic domain of F(1) is coupled via a rotary mechanism of the central stalk subunits to proton translocation. Functionally, key component of the F(0) channel; it plays a direct role in translocation across the membrane. A homomeric c-ring of between 10-14 subunits forms the central stalk rotor element with the F(1) delta and epsilon subunits. In Bacteroides thetaiotaomicron (strain ATCC 29148 / DSM 2079 / JCM 5827 / CCUG 10774 / NCTC 10582 / VPI-5482 / E50), this protein is ATP synthase subunit c.